A 397-amino-acid chain; its full sequence is uncharacterized protein (397 aa).

9 helical membrane-spanning segments follow: residues Met-1–Val-21, Val-39–Phe-59, Glu-76–Pro-96, Val-103–Ala-123, Ala-124–Ala-144, Met-194–Phe-214, Ala-219–Leu-239, Leu-255–Leu-275, and Gln-301–Ala-321.

This sequence belongs to the TerC family.

It localises to the cell membrane. This is an uncharacterized protein from Mycobacterium bovis (strain ATCC BAA-935 / AF2122/97).